The chain runs to 359 residues: MAKELTREMLWEAGAQFGHQTKRWNPKMKPYIYGEKNKIHIIDLQQTLWRLEDVKKLMANIAARKGKILFVGTKKQAKWIVKDAAERCESFYVNQRWLGGTLTNLKTIHLRVKRLWNIERQEKNGELKLLPKKEQMLIKKEKDKLEKFLGGIKGMKELPQALFVVDPKEEHIAVREARKLRIPVIAICDTNVDPVPIDYIIPANDDTSRSIAIITHHIADLYGDAMGIKMPEPQFKPSEFTRRDGDENRNSRGGQYDNRRMSGRNERGRDTHYSHKAPNSGKEEAPVGTEPVATTSAPSFNFNTINVVDNDLEKTLSKLKVDELEILSEGFALPKAKKAEMVSELSKHLTIVDNKIVKK.

The segment at 232 to 295 is disordered; the sequence is EPQFKPSEFT…PVGTEPVATT (64 aa). Basic and acidic residues-rich tracts occupy residues 239-250 and 257-273; these read EFTRRDGDENRN and DNRRMSGRNERGRDTHY.

This sequence belongs to the universal ribosomal protein uS2 family.

The sequence is that of Small ribosomal subunit protein uS2 (rpsB) from Spiroplasma citri.